A 216-amino-acid polypeptide reads, in one-letter code: MKYQLTATEARVIGCLLEKQVTTPEQYPLSVNAVTLACNQKSNREPVLNLSEHDVQDHLDALVKRHYLRTVSGFGNRVTKYEQRFCNSEFGDLKFSSAEVAIVTTLLLRGAQTPGELRSRASRMHEFSDMQEVEQTLENLASREDGPFVMRLPREPGKRESRFMHLFSGDVETLVNVAEAVSPVEDESLAARVDALETEVAELKQRLDSLLAHLGE.

The protein belongs to the UPF0502 family.

In Enterobacter sp. (strain 638), this protein is UPF0502 protein Ent638_1581.